A 374-amino-acid polypeptide reads, in one-letter code: uncharacterized protein (374 aa).

Residues 39 to 66 (RDVRKHLESRDAKQELIDSLEEAVRDSR) adopt a coiled-coil conformation.

This is an uncharacterized protein from Mycobacterium tuberculosis (strain CDC 1551 / Oshkosh).